We begin with the raw amino-acid sequence, 311 residues long: GTP cyclohydrolase MptA (311 aa).

It belongs to the GTP cyclohydrolase IV family. As to quaternary structure, homodimer. Requires Fe(2+) as cofactor.

The enzyme catalyses GTP + H2O = 7,8-dihydroneopterin 2',3'-cyclic phosphate + formate + diphosphate + H(+). It functions in the pathway cofactor biosynthesis; 5,6,7,8-tetrahydromethanopterin biosynthesis. Converts GTP to 7,8-dihydro-D-neopterin 2',3'-cyclic phosphate, the first intermediate in the biosynthesis of coenzyme methanopterin. The protein is GTP cyclohydrolase MptA of Methanobrevibacter smithii (strain ATCC 35061 / DSM 861 / OCM 144 / PS).